Consider the following 159-residue polypeptide: Transcription elongation factor GreA (159 aa).

It belongs to the GreA/GreB family.

Its function is as follows. Necessary for efficient RNA polymerase transcription elongation past template-encoded arresting sites. The arresting sites in DNA have the property of trapping a certain fraction of elongating RNA polymerases that pass through, resulting in locked ternary complexes. Cleavage of the nascent transcript by cleavage factors such as GreA or GreB allows the resumption of elongation from the new 3'terminus. GreA releases sequences of 2 to 3 nucleotides. The sequence is that of Transcription elongation factor GreA from Buchnera aphidicola subsp. Baizongia pistaciae (strain Bp).